The primary structure comprises 462 residues: ATP-dependent protease ATPase subunit HslU (462 aa).

ATP-binding positions include Ile-21, 63–68 (GVGKTE), Asp-275, Glu-340, and Arg-412.

The protein belongs to the ClpX chaperone family. HslU subfamily. In terms of assembly, a double ring-shaped homohexamer of HslV is capped on each side by a ring-shaped HslU homohexamer. The assembly of the HslU/HslV complex is dependent on binding of ATP.

Its subcellular location is the cytoplasm. ATPase subunit of a proteasome-like degradation complex; this subunit has chaperone activity. The binding of ATP and its subsequent hydrolysis by HslU are essential for unfolding of protein substrates subsequently hydrolyzed by HslV. HslU recognizes the N-terminal part of its protein substrates and unfolds these before they are guided to HslV for hydrolysis. In Pseudothermotoga lettingae (strain ATCC BAA-301 / DSM 14385 / NBRC 107922 / TMO) (Thermotoga lettingae), this protein is ATP-dependent protease ATPase subunit HslU.